Here is a 107-residue protein sequence, read N- to C-terminus: uncharacterized protein (107 aa).

Belongs to the HesB/IscA family.

This is an uncharacterized protein from Azotobacter vinelandii.